The primary structure comprises 317 residues: Melanocyte-stimulating hormone receptor (317 aa).

At 1–37 the chain is on the extracellular side; sequence MPMQGAQRRLLGSLNSTPTATPNLGLAANHTGAPCLE. Asn-29 carries N-linked (GlcNAc...) asparagine glycosylation. A helical membrane pass occupies residues 38–63; sequence VSIPDGLFLSLGLVSLVENVLVVAAI. Residues 64–72 lie on the Cytoplasmic side of the membrane; the sequence is AKNRNLHSP. Residues 73-93 traverse the membrane as a helical segment; that stretch reads MYCFICCLALSDLLVSGSNML. Topologically, residues 94–118 are extracellular; sequence EMAVILLLEAGALATRASVVQQLQN. Residues 119–140 traverse the membrane as a helical segment; sequence TIDVLTCSSMLCSLCFLGAIAV. At 141–163 the chain is on the cytoplasmic side; that stretch reads DRYVSIFYALRYHSIVTLPRARR. The helical transmembrane segment at 164-183 threads the bilayer; that stretch reads AIAAIWVASVLSSTLFIAYC. At 184–191 the chain is on the extracellular side; it reads DHAAVLLC. Residues 192–211 traverse the membrane as a helical segment; that stretch reads LVVFFLAMLVLMAVLYVHML. The Cytoplasmic segment spans residues 212-240; that stretch reads ARACQHAQGITRLHKRQLPAHQGFGLRGA. A helical membrane pass occupies residues 241–266; that stretch reads ATLTILLGIFFVCWGPFFLHLMLVVL. Over 267-279 the chain is Extracellular; it reads CPQHLTCSCIFKN. Residues 280-300 traverse the membrane as a helical segment; sequence FKVFLTLIICNTIIDPLIYAF. The Cytoplasmic segment spans residues 301 to 317; that stretch reads RSQELCRTLKEVLLCSW. Residue Cys-315 is the site of S-palmitoyl cysteine attachment.

Belongs to the G-protein coupled receptor 1 family. Interacts with MGRN1, but does not undergo MGRN1-mediated ubiquitination; this interaction competes with GNAS-binding and thus inhibits agonist-induced cAMP production. Interacts with OPN3; the interaction results in a decrease in MC1R-mediated cAMP signaling and ultimately a decrease in melanin production in melanocytes.

Its subcellular location is the cell membrane. Receptor for MSH (alpha, beta and gamma) and ACTH. The activity of this receptor is mediated by G proteins which activate adenylate cyclase. Mediates melanogenesis, the production of eumelanin (black/brown) and phaeomelanin (red/yellow), via regulation of cAMP signaling in melanocytes. The polypeptide is Melanocyte-stimulating hormone receptor (MC1R) (Alouatta sara (Bolivian red howler monkey)).